Consider the following 362-residue polypeptide: Peptide chain release factor 1 (362 aa).

An N5-methylglutamine modification is found at glutamine 235.

The protein belongs to the prokaryotic/mitochondrial release factor family. In terms of processing, methylated by PrmC. Methylation increases the termination efficiency of RF1.

The protein resides in the cytoplasm. Functionally, peptide chain release factor 1 directs the termination of translation in response to the peptide chain termination codons UAG and UAA. This is Peptide chain release factor 1 from Buchnera aphidicola subsp. Baizongia pistaciae (strain Bp).